The chain runs to 379 residues: Protein-glutamate methylesterase/protein-glutamine glutaminase (379 aa).

In terms of domain architecture, Response regulatory spans 4–121 (KILVVDDSIF…AANRQDAVAL (118 aa)). Asp-55 carries the post-translational modification 4-aspartylphosphate. One can recognise a CheB-type methylesterase domain in the interval 186–379 (SGKKYRCLAI…FESHILKEMA (194 aa)). Residues Ser-198, His-225, and Asp-323 contribute to the active site.

The protein belongs to the CheB family. Phosphorylated by CheA. Phosphorylation of the N-terminal regulatory domain activates the methylesterase activity.

It is found in the cytoplasm. It catalyses the reaction [protein]-L-glutamate 5-O-methyl ester + H2O = L-glutamyl-[protein] + methanol + H(+). The catalysed reaction is L-glutaminyl-[protein] + H2O = L-glutamyl-[protein] + NH4(+). Functionally, involved in chemotaxis. Part of a chemotaxis signal transduction system that modulates chemotaxis in response to various stimuli. Catalyzes the demethylation of specific methylglutamate residues introduced into the chemoreceptors (methyl-accepting chemotaxis proteins or MCP) by CheR. Also mediates the irreversible deamidation of specific glutamine residues to glutamic acid. The polypeptide is Protein-glutamate methylesterase/protein-glutamine glutaminase (Pseudoalteromonas atlantica (strain T6c / ATCC BAA-1087)).